Consider the following 601-residue polypeptide: Terpinolene synthase, chloroplastic (601 aa).

The N-terminal 32 residues, 1–32 (MSTFVISNSMHVGISFSFLHKLPQTPPPQVVC), are a transit peptide targeting the chloroplast. Mg(2+) is bound by residues D354, D358, D498, T502, and E506. The short motif at 354-358 (DDVYD) is the DDXXD motif element.

It belongs to the terpene synthase family. Tpsd subfamily. Mg(2+) serves as cofactor. The cofactor is Mn(2+).

The protein resides in the plastid. Its subcellular location is the chloroplast. The enzyme catalyses (2E)-geranyl diphosphate = terpinolene + diphosphate. The protein operates within secondary metabolite biosynthesis; terpenoid biosynthesis. Functionally, monoterpene synthase that catalyzes the formation of terpinolene and other monoterpenes from geranyl diphosphate. The chain is Terpinolene synthase, chloroplastic (TES) from Ocimum basilicum (Sweet basil).